Reading from the N-terminus, the 400-residue chain is Dehydrogenase efuE (400 aa).

Residues 222–223 (AI), 303–305 (TAR), and Asp-329 each bind NAD(+). Arg-305 is a catalytic residue. Glu-334 is a catalytic residue. Residue His-352 is the Proton donor of the active site. Position 352-355 (352-355 (HLGG)) interacts with NAD(+).

Belongs to the D-isomer specific 2-hydroxyacid dehydrogenase family.

It functions in the pathway secondary metabolite biosynthesis; terpenoid biosynthesis. In terms of biological role, dehydrogenase; part of the gene cluster that mediates the biosynthesis of enfumafungin, a glycosylated fernene-type triterpenoid with potent antifungal activity, mediated by its interaction with beta-1,3-glucan synthase and the fungal cell wall. The pathway begins with the terpene cyclase-glycosyl transferase fusion protein that most likely uses 2,3-oxidosqualene as substrate and catalyzes glycosylation immediately after cyclization. The fernene glycoside then could be processed by the desaturase efuI which catalyzes isomerization of a double bond established by efuA to form the core structure. The latter would then undergo a series of hydroxylations in unknown order at C-2, C-19, C-23 and C-25, which would be catalyzed by two of the three cytochrome P450 monooxygenases efuB, efuG or efuH. The hydroxy-group at C-25 becomes oxidized by the dehydrogenase efuE to enable a spontaneous, non-enzymatic hemiacetal formation with C-23. After hydroxylation at C-2, acetylation by the acetyltransferase efuC takes place. The final steps in enfumafungin biosynthesis require expansion of the 5-membered ring by lactonization via a Baeyer-Villiger reaction mediated by one of the BGC's cytochrome P450 monooxygenases (efuB, efuG or efuH) followed by ring cleavage. This type of reaction would establish a double bond between C-20 and C-21 which could be reduced by the reductase efuL to form the final product. In Hormonema carpetanum, this protein is Dehydrogenase efuE.